The sequence spans 336 residues: Immune-associated nucleotide-binding protein 6 (336 aa).

The region spanning 33–241 (EPVKNVVLVG…FTDTMHRRIQ (209 aa)) is the AIG1-type G domain. The interval 42–49 (GRTGNGKS) is G1. Residues 42-50 (GRTGNGKSA) and serine 63 each bind GTP. Positions 69–73 (GVTTR) are G2. The tract at residues 91–94 (DTPG) is G3. Positions 161 to 164 (TCGD) are G4. Positions 200-202 (DNR) are G5. A GTP-binding site is contributed by asparagine 201. The stretch at 237-270 (HRRIQEEAARVKREEKEIEEKNIADEEKAALKKQ) forms a coiled coil.

Belongs to the TRAFAC class TrmE-Era-EngA-EngB-Septin-like GTPase superfamily. AIG1/Toc34/Toc159-like paraseptin GTPase family. IAN subfamily. Mostly expressed in pollen. Also detected in lateral roots and radicles.

The chain is Immune-associated nucleotide-binding protein 6 from Arabidopsis thaliana (Mouse-ear cress).